Reading from the N-terminus, the 306-residue chain is Non-specific ribonucleoside hydrolase RihC (306 aa).

The active site involves H235.

This sequence belongs to the IUNH family. RihC subfamily.

Functionally, hydrolyzes both purine and pyrimidine ribonucleosides with a broad-substrate specificity. In Salmonella heidelberg (strain SL476), this protein is Non-specific ribonucleoside hydrolase RihC.